The chain runs to 175 residues: Protein OPG036 (175 aa).

It belongs to the poxviridae OPG036 family.

It localises to the host nucleus. Functionally, plays a role in the inhibition of host innate immune response. Within the host nucleus, inhibits activation of interferon-beta promoter by inhibiting IRF3 activation. This Bos taurus (Bovine) protein is Protein OPG036 (OPG036).